Reading from the N-terminus, the 61-residue chain is Large ribosomal subunit protein eL29 (61 aa).

The span at 1–26 (MAKSKNHTNHNQNKKAHRNGIKRPQK) shows a compositional bias: basic residues. The disordered stretch occupies residues 1–32 (MAKSKNHTNHNQNKKAHRNGIKRPQKHRYDSL).

Belongs to the eukaryotic ribosomal protein eL29 family. Component of the large ribosomal subunit (LSU). Mature yeast ribosomes consist of a small (40S) and a large (60S) subunit. The 40S small subunit contains 1 molecule of ribosomal RNA (18S rRNA) and at least 33 different proteins. The large 60S subunit contains 3 rRNA molecules (25S, 5.8S and 5S rRNA) and at least 46 different proteins.

Its subcellular location is the cytoplasm. The protein resides in the nucleus. The protein localises to the nucleolus. Component of the ribosome, a large ribonucleoprotein complex responsible for the synthesis of proteins in the cell. The small ribosomal subunit (SSU) binds messenger RNAs (mRNAs) and translates the encoded message by selecting cognate aminoacyl-transfer RNA (tRNA) molecules. The large subunit (LSU) contains the ribosomal catalytic site termed the peptidyl transferase center (PTC), which catalyzes the formation of peptide bonds, thereby polymerizing the amino acids delivered by tRNAs into a polypeptide chain. The nascent polypeptides leave the ribosome through a tunnel in the LSU and interact with protein factors that function in enzymatic processing, targeting, and the membrane insertion of nascent chains at the exit of the ribosomal tunnel. This is Large ribosomal subunit protein eL29 (rpl29) from Schizosaccharomyces pombe (strain 972 / ATCC 24843) (Fission yeast).